Here is a 190-residue protein sequence, read N- to C-terminus: Inosine triphosphate pyrophosphatase (190 aa).

8–13 (TGNANK) is a binding site for ITP. Residue glutamate 37 participates in Mg(2+) binding. ITP is bound by residues lysine 49, 65–66 (DT), lysine 82, 140–143 (FGWD), lysine 163, and 168–169 (HR).

The protein belongs to the HAM1 NTPase family. Homodimer. The cofactor is Mg(2+). Mn(2+) is required as a cofactor.

The protein resides in the cytoplasm. It is found in the nucleus. The enzyme catalyses ITP + H2O = IMP + diphosphate + H(+). The catalysed reaction is dITP + H2O = dIMP + diphosphate + H(+). It catalyses the reaction XTP + H2O = XMP + diphosphate + H(+). Pyrophosphatase that hydrolyzes non-canonical purine nucleotides such as inosine triphosphate (ITP), deoxyinosine triphosphate (dITP) or xanthosine 5'-triphosphate (XTP) to their respective monophosphate derivatives. The enzyme does not distinguish between the deoxy- and ribose forms. Probably excludes non-canonical purines from RNA and DNA precursor pools, thus preventing their incorporation into RNA and DNA and avoiding chromosomal lesions. In Batrachochytrium dendrobatidis (strain JAM81 / FGSC 10211) (Frog chytrid fungus), this protein is Inosine triphosphate pyrophosphatase.